The sequence spans 697 residues: Phosphoribosylformylglycinamidine synthase subunit PurL (697 aa).

The active site involves His-34. Residues Tyr-37 and Lys-76 each coordinate ATP. Residue Glu-78 coordinates Mg(2+). Residues 79–82 and Arg-101 each bind substrate; that span reads SHNH. Residue His-80 is the Proton acceptor of the active site. Asp-102 contributes to the Mg(2+) binding site. Gln-224 contacts substrate. Asp-250 serves as a coordination point for Mg(2+). 294–296 serves as a coordination point for substrate; that stretch reads ETQ. ATP-binding residues include Asp-472 and Gly-509. Ser-512 contributes to the substrate binding site.

It belongs to the FGAMS family. In terms of assembly, monomer. Part of the FGAM synthase complex composed of 1 PurL, 1 PurQ and 2 PurS subunits.

It localises to the cytoplasm. It catalyses the reaction N(2)-formyl-N(1)-(5-phospho-beta-D-ribosyl)glycinamide + L-glutamine + ATP + H2O = 2-formamido-N(1)-(5-O-phospho-beta-D-ribosyl)acetamidine + L-glutamate + ADP + phosphate + H(+). It participates in purine metabolism; IMP biosynthesis via de novo pathway; 5-amino-1-(5-phospho-D-ribosyl)imidazole from N(2)-formyl-N(1)-(5-phospho-D-ribosyl)glycinamide: step 1/2. Part of the phosphoribosylformylglycinamidine synthase complex involved in the purines biosynthetic pathway. Catalyzes the ATP-dependent conversion of formylglycinamide ribonucleotide (FGAR) and glutamine to yield formylglycinamidine ribonucleotide (FGAM) and glutamate. The FGAM synthase complex is composed of three subunits. PurQ produces an ammonia molecule by converting glutamine to glutamate. PurL transfers the ammonia molecule to FGAR to form FGAM in an ATP-dependent manner. PurS interacts with PurQ and PurL and is thought to assist in the transfer of the ammonia molecule from PurQ to PurL. The protein is Phosphoribosylformylglycinamidine synthase subunit PurL of Pyrobaculum aerophilum (strain ATCC 51768 / DSM 7523 / JCM 9630 / CIP 104966 / NBRC 100827 / IM2).